The following is a 313-amino-acid chain: Aspartate carbamoyltransferase catalytic subunit (313 aa).

2 residues coordinate carbamoyl phosphate: arginine 59 and threonine 60. Residue lysine 87 coordinates L-aspartate. Carbamoyl phosphate is bound by residues arginine 109, histidine 137, and glutamine 140. The L-aspartate site is built by arginine 170 and arginine 224. Positions 265 and 266 each coordinate carbamoyl phosphate.

Belongs to the aspartate/ornithine carbamoyltransferase superfamily. ATCase family. Heterododecamer (2C3:3R2) of six catalytic PyrB chains organized as two trimers (C3), and six regulatory PyrI chains organized as three dimers (R2).

It catalyses the reaction carbamoyl phosphate + L-aspartate = N-carbamoyl-L-aspartate + phosphate + H(+). Its pathway is pyrimidine metabolism; UMP biosynthesis via de novo pathway; (S)-dihydroorotate from bicarbonate: step 2/3. In terms of biological role, catalyzes the condensation of carbamoyl phosphate and aspartate to form carbamoyl aspartate and inorganic phosphate, the committed step in the de novo pyrimidine nucleotide biosynthesis pathway. This chain is Aspartate carbamoyltransferase catalytic subunit, found in Rhizobium meliloti (strain 1021) (Ensifer meliloti).